A 189-amino-acid chain; its full sequence is Cell division protein SepF (189 aa).

2 disordered regions span residues Met-1–Gly-75 and Ser-155–Pro-174.

It belongs to the SepF family. Homodimer. Interacts with FtsZ.

It localises to the cytoplasm. In terms of biological role, cell division protein that is part of the divisome complex and is recruited early to the Z-ring. Probably stimulates Z-ring formation, perhaps through the cross-linking of FtsZ protofilaments. Its function overlaps with FtsA. The chain is Cell division protein SepF from Synechococcus sp. (strain JA-3-3Ab) (Cyanobacteria bacterium Yellowstone A-Prime).